Reading from the N-terminus, the 210-residue chain is Keratin-associated protein 4-9 (210 aa).

Tandem repeats lie at residues 24-28 (CCRPS), 29-33 (CCETT), 34-38 (CCRTT), 39-43 (CCRPS), 44-48 (CCVSS), 49-53 (CCRPQ), 54-58 (CCQSV), 59-63 (CCQPT), 69-73 (CCQTT), 74-78 (CCRTT), 84-88 (CCVSS), 89-93 (CCRPQ), 94-98 (CCQPA), 99-103 (CCQPT), 104-108 (CCRPS), 109-113 (CCETT), 114-118 (CCHPR), 119-123 (CCISS), 124-128 (CCRPS), 129-133 (CCVSS), 134-138 (CCKPQ), 139-143 (CCQSV), 144-148 (CCQPN), 149-153 (CCRPS), 159-163 (CCRPS), 164-168 (CCESS), 169-173 (CCRPC), and 174-178 (CCVRP). The interval 24 to 178 (CCRPSCCETT…CCRPCCCVRP (155 aa)) is 29 X 5 AA repeats of C-C-[RQVHIEK]-[SPTR]-[VSTQCRNP].

Belongs to the KRTAP type 4 family. In terms of assembly, interacts with hair keratins. As to expression, expressed in the hair follicles.

Functionally, in the hair cortex, hair keratin intermediate filaments are embedded in an interfilamentous matrix, consisting of hair keratin-associated proteins (KRTAP), which are essential for the formation of a rigid and resistant hair shaft through their extensive disulfide bond cross-linking with abundant cysteine residues of hair keratins. The matrix proteins include the high-sulfur and high-glycine-tyrosine keratins. The polypeptide is Keratin-associated protein 4-9 (KRTAP4-9) (Homo sapiens (Human)).